The primary structure comprises 345 residues: Transcription factor 19 (345 aa).

In terms of domain architecture, FHA spans 31-88; the sequence is YRLGHRADLCDVALRPQQEPGLISGIHAELHAEPRGDDWRVSLEDHSSQGTLVNNVRL. Phosphoserine is present on S78. Disordered stretches follow at residues 147-167 and 190-227; these read AGFRPMLPSQGAPQRPLSTLS and LTFSPSWGGPKSLPVPAPPGEVGTTPSAPPQRNRRKSV. A PHD-type zinc finger spans residues 293–342; sequence AAPCCCLPQEETVAWVQCDGCDVWFHVACVGCSIQAAREADFRCPGCRAG. Zn(2+) is bound by residues C296, C298, C310, C313, H318, C321, C336, and C339.

The protein resides in the nucleus. Functionally, potential transcription factor that may play a role in the regulation of genes involved in cell cycle G1/S transition. May bind to regulatory elements of genes, including the promoter of the transcription factor FOXO1. This chain is Transcription factor 19 (TCF19), found in Pan troglodytes (Chimpanzee).